The sequence spans 400 residues: Tyrosine--tRNA ligase (400 aa).

Residues 42–51 (PTAPDLHLGH) carry the 'HIGH' region motif. The short motif at 226–230 (KMSKS) is the 'KMSKS' region element. Lys-229 serves as a coordination point for ATP. Positions 339–399 (FSISYILRRA…GKKKIAQIFV (61 aa)) constitute an S4 RNA-binding domain.

It belongs to the class-I aminoacyl-tRNA synthetase family. TyrS type 2 subfamily. As to quaternary structure, homodimer.

Its subcellular location is the cytoplasm. The enzyme catalyses tRNA(Tyr) + L-tyrosine + ATP = L-tyrosyl-tRNA(Tyr) + AMP + diphosphate + H(+). In terms of biological role, catalyzes the attachment of tyrosine to tRNA(Tyr) in a two-step reaction: tyrosine is first activated by ATP to form Tyr-AMP and then transferred to the acceptor end of tRNA(Tyr). In Hahella chejuensis (strain KCTC 2396), this protein is Tyrosine--tRNA ligase.